Reading from the N-terminus, the 879-residue chain is Leucine--tRNA ligase (879 aa).

The 'HIGH' region signature appears at 46 to 56 (PYPSGALHMGH). The 'KMSKS' region signature appears at 638 to 642 (KMSKS). K641 contacts ATP.

It belongs to the class-I aminoacyl-tRNA synthetase family.

Its subcellular location is the cytoplasm. It catalyses the reaction tRNA(Leu) + L-leucine + ATP = L-leucyl-tRNA(Leu) + AMP + diphosphate. This chain is Leucine--tRNA ligase, found in Xanthomonas campestris pv. campestris (strain 8004).